We begin with the raw amino-acid sequence, 194 residues long: dCTP deaminase (194 aa).

DCTP contacts are provided by residues 110–115 (RSSLAR), aspartate 128, 136–138 (VLE), tyrosine 171, lysine 178, and glutamine 182. Glutamate 138 acts as the Proton donor/acceptor in catalysis. The disordered stretch occupies residues 175–194 (KDAKYKNQQSAVSSRINQDD). Residues 180-194 (KNQQSAVSSRINQDD) are compositionally biased toward polar residues.

This sequence belongs to the dCTP deaminase family. Homotrimer.

The enzyme catalyses dCTP + H2O + H(+) = dUTP + NH4(+). It functions in the pathway pyrimidine metabolism; dUMP biosynthesis; dUMP from dCTP (dUTP route): step 1/2. Functionally, catalyzes the deamination of dCTP to dUTP. The sequence is that of dCTP deaminase from Actinobacillus pleuropneumoniae serotype 5b (strain L20).